The primary structure comprises 295 residues: 33 kDa chaperonin (295 aa).

2 disulfides stabilise this stretch: Cys-237-Cys-239 and Cys-270-Cys-273.

Belongs to the HSP33 family. In terms of processing, under oxidizing conditions two disulfide bonds are formed involving the reactive cysteines. Under reducing conditions zinc is bound to the reactive cysteines and the protein is inactive.

Its subcellular location is the cytoplasm. In terms of biological role, redox regulated molecular chaperone. Protects both thermally unfolding and oxidatively damaged proteins from irreversible aggregation. Plays an important role in the bacterial defense system toward oxidative stress. In Geobacillus sp. (strain WCH70), this protein is 33 kDa chaperonin.